We begin with the raw amino-acid sequence, 367 residues long: MLRAVSRAVSRAAVRCAWRSGPSVARPLAMSRSPAPRAVSGAPLRPGTVLGTMEMGRRMDASASAATVRAFLERGLNELDTAFMYCDGQSESILGSLGLGLGSGDCTVKIATKANPWDGKSLKPDSVRSQLETSLKRLQCPRVDLFYLHAPDHGTPIVETLQACQQLHQEGKFVELGLSNYASWEVAEIYTLCKSNGWILPTVYQGMYNATTRQVETELLPCLRYFGLRFYAYNPLAGGLLTGKYRYEDKDGKQPEGRFFGNSWSETYRNRFWKEHHFEAIALVEKALKTTYGTSAPSMTSAALRWMYHHSQLQGTRGDAVILGMSSLEQLEQNLAATEEGPLEPAVVEAFNQAWNVVAHECPNYFR.

Residues 1–46 (MLRAVSRAVSRAAVRCAWRSGPSVARPLAMSRSPAPRAVSGAPLRP) constitute a mitochondrion transit peptide. Residues 27–46 (PLAMSRSPAPRAVSGAPLRP) form a disordered region. Serine 40 is subject to Phosphoserine. Threonine 48 is subject to Phosphothreonine. Residue aspartate 80 coordinates NADP(+). Catalysis depends on tyrosine 85, which acts as the Proton donor. Position 136 is an N6-acetyllysine (lysine 136). Histidine 149 contributes to the substrate binding site. Residues 179-180 (SN), glutamine 205, 234-244 (NPLAGGLLTGK), and arginine 258 contribute to the NADP(+) site. N6-succinyllysine is present on lysine 244. Position 263 is a phosphoserine (serine 263). Positions 268 and 271 each coordinate substrate. An NADP(+)-binding site is contributed by 326-334 (SSLEQLEQN). Arginine 367 serves as a coordination point for substrate.

The protein belongs to the aldo/keto reductase family. Aldo/keto reductase 2 subfamily. As to quaternary structure, homodimer. Heterodimer with AKR7A1.

Its subcellular location is the mitochondrion. It localises to the golgi apparatus. The protein localises to the golgi stack. It is found in the cytoplasm. The catalysed reaction is 4-hydroxybutanoate + NADP(+) = succinate semialdehyde + NADPH + H(+). Catalyzes the NADPH-dependent reduction of succinic semialdehyde to gamma-hydroxybutyrate. May have an important role in producing the neuromodulator gamma-hydroxybutyrate (GHB). Has broad substrate specificity. Can reduce the dialdehyde protein-binding form of aflatoxin B1 (AFB1) to the non-binding AFB1 dialcohol. Acts as a 2-carboxybenzaldehyde reductase. This chain is Aflatoxin B1 aldehyde reductase member 2 (Akr7a2), found in Rattus norvegicus (Rat).